A 373-amino-acid chain; its full sequence is Cobalt-precorrin-5B C(1)-methyltransferase (373 aa).

Belongs to the CbiD family.

It carries out the reaction Co-precorrin-5B + S-adenosyl-L-methionine = Co-precorrin-6A + S-adenosyl-L-homocysteine. It functions in the pathway cofactor biosynthesis; adenosylcobalamin biosynthesis; cob(II)yrinate a,c-diamide from sirohydrochlorin (anaerobic route): step 6/10. Functionally, catalyzes the methylation of C-1 in cobalt-precorrin-5B to form cobalt-precorrin-6A. This chain is Cobalt-precorrin-5B C(1)-methyltransferase, found in Listeria monocytogenes serotype 4b (strain CLIP80459).